The primary structure comprises 185 residues: Photosystem I assembly protein Ycf4 (185 aa).

2 helical membrane-spanning segments follow: residues 24 to 44 and 66 to 86; these read YIIG…SISS and IIMG…WYLV.

This sequence belongs to the Ycf4 family.

It is found in the cellular thylakoid membrane. In terms of biological role, seems to be required for the assembly of the photosystem I complex. The sequence is that of Photosystem I assembly protein Ycf4 from Prochlorococcus marinus (strain AS9601).